Reading from the N-terminus, the 445-residue chain is Branched-chain amino acid permease BraB (445 aa).

12 helical membrane passes run 11–31, 45–65, 79–99, 122–142, 158–178, 192–212, 233–253, 275–295, 311–331, 339–359, 375–395, and 415–435; these read IIIGFMLFALFFGAGNMIYPP, IGGFLLTGVGLPLLGIIAIAL, PVFGTIFTVVLYLSIGPLFAI, LSLLIFTLIFFGVTYYLALNP, FTIILIIVLKAIFTPMGGLGA, FLEGYKTMDALASIVFGVVVV, AGVIAALGLTFIYVSLAYLGA, YLFGSLGNIVLGAAITVACLT, LIPALSYKIVVTIVTLFSLII, IIAFSVPILSAIYPLAIVIIV, IACLIGTGLFSILDGIKAAGF, and IGWVLPGIVGAVIGYVLTLFI.

It belongs to the branched chain amino acid transporter family.

The protein localises to the cell membrane. Branched-chain amino acid transport system which is involved in the uptake of isoleucine, valine and probably leucine. Together with BcaP and BrnQ, plays an important role in the activation of CodY, a branched-chain amino acid-responsive transcriptional regulator that controls the expression of several dozen transcription units in B.subtilis. This Bacillus subtilis (strain 168) protein is Branched-chain amino acid permease BraB.